Consider the following 427-residue polypeptide: Glycophorin-binding protein-related antigen (427 aa).

GBP repeat units lie at residues 109 to 149 (LTSA…DELE), 150 to 189 (TSAD…DEVE), 190 to 229 (SSAD…DELE), 230 to 269 (TSAD…EVET), 270 to 307 (SADP…SEVE), 308 to 347 (TSAD…DELE), 348 to 387 (TSAD…DELE), and 388 to 427 (TSAD…DESS).

This is Glycophorin-binding protein-related antigen (GBPH) from Plasmodium falciparum (isolate FCBR / Columbia).